Consider the following 358-residue polypeptide: tRNA-specific 2-thiouridylase MnmA (358 aa).

ATP contacts are provided by residues 7–14 (AMSGGVDS) and Leu-33. Residue Cys-101 is the Nucleophile of the active site. Cys-101 and Cys-197 are joined by a disulfide. Residue Gly-125 participates in ATP binding. Residues 147-149 (KDQ) are interaction with tRNA. Cys-197 acts as the Cysteine persulfide intermediate in catalysis.

Belongs to the MnmA/TRMU family.

It is found in the cytoplasm. It catalyses the reaction S-sulfanyl-L-cysteinyl-[protein] + uridine(34) in tRNA + AH2 + ATP = 2-thiouridine(34) in tRNA + L-cysteinyl-[protein] + A + AMP + diphosphate + H(+). Functionally, catalyzes the 2-thiolation of uridine at the wobble position (U34) of tRNA, leading to the formation of s(2)U34. The polypeptide is tRNA-specific 2-thiouridylase MnmA (Rickettsia prowazekii (strain Madrid E)).